We begin with the raw amino-acid sequence, 559 residues long: Urocanate hydratase (559 aa).

NAD(+)-binding positions include 54 to 55, Q132, 178 to 180, E198, R203, 244 to 245, 265 to 269, 275 to 276, and Y324; these read GG, GMG, NA, QTSAH, and YL. The active site involves C412. G494 is an NAD(+) binding site.

It belongs to the urocanase family. It depends on NAD(+) as a cofactor.

Its subcellular location is the cytoplasm. The catalysed reaction is 4-imidazolone-5-propanoate = trans-urocanate + H2O. It functions in the pathway amino-acid degradation; L-histidine degradation into L-glutamate; N-formimidoyl-L-glutamate from L-histidine: step 2/3. In terms of biological role, catalyzes the conversion of urocanate to 4-imidazolone-5-propionate. The chain is Urocanate hydratase from Azotobacter vinelandii (strain DJ / ATCC BAA-1303).